A 573-amino-acid chain; its full sequence is Phosphomethylpyrimidine synthase (573 aa).

Residues N190, M219, Y248, H284, 304–306, 345–348, and E384 contribute to the substrate site; these read SRG and DGLR. H388 contacts Zn(2+). Substrate is bound at residue Y411. H452 provides a ligand contact to Zn(2+). 3 residues coordinate [4Fe-4S] cluster: C532, C535, and C540.

Belongs to the ThiC family. [4Fe-4S] cluster is required as a cofactor.

The catalysed reaction is 5-amino-1-(5-phospho-beta-D-ribosyl)imidazole + S-adenosyl-L-methionine = 4-amino-2-methyl-5-(phosphooxymethyl)pyrimidine + CO + 5'-deoxyadenosine + formate + L-methionine + 3 H(+). The protein operates within cofactor biosynthesis; thiamine diphosphate biosynthesis. Catalyzes the synthesis of the hydroxymethylpyrimidine phosphate (HMP-P) moiety of thiamine from aminoimidazole ribotide (AIR) in a radical S-adenosyl-L-methionine (SAM)-dependent reaction. The chain is Phosphomethylpyrimidine synthase from Geobacillus sp. (strain WCH70).